Consider the following 503-residue polypeptide: uncharacterized protein (503 aa).

The stretch at 437 to 465 (LNKDLILENLIETENENDKQEFQKLLRTI) forms a coiled coil.

Belongs to the IIV-6 467R family.

This is an uncharacterized protein from Invertebrate iridescent virus 6 (IIV-6).